The following is a 941-amino-acid chain: Protein translocase subunit SecA (941 aa).

ATP contacts are provided by residues Gln-87, 105-109 (GEGKT), and Asp-524. The tract at residues 871 to 919 (DEQPPMPAMEAHKLDPNTGEDQVAQAQSGLAPVAPAKRDPANPATWGKV) is disordered. Residues Cys-925, Cys-927, Cys-936, and His-937 each coordinate Zn(2+).

Belongs to the SecA family. Monomer and homodimer. Part of the essential Sec protein translocation apparatus which comprises SecA, SecYEG and auxiliary proteins SecDF-YajC and YidC. It depends on Zn(2+) as a cofactor.

It localises to the cell inner membrane. The protein resides in the cytoplasm. It carries out the reaction ATP + H2O + cellular proteinSide 1 = ADP + phosphate + cellular proteinSide 2.. Functionally, part of the Sec protein translocase complex. Interacts with the SecYEG preprotein conducting channel. Has a central role in coupling the hydrolysis of ATP to the transfer of proteins into and across the cell membrane, serving both as a receptor for the preprotein-SecB complex and as an ATP-driven molecular motor driving the stepwise translocation of polypeptide chains across the membrane. This chain is Protein translocase subunit SecA, found in Afipia carboxidovorans (strain ATCC 49405 / DSM 1227 / KCTC 32145 / OM5) (Oligotropha carboxidovorans).